The sequence spans 259 residues: Polycomb group RING finger protein 1 (259 aa).

A2 bears the N-acetylalanine mark. S3 carries the post-translational modification Phosphoserine. K24 participates in a covalent cross-link: Glycyl lysine isopeptide (Lys-Gly) (interchain with G-Cter in SUMO2). The segment at 47-86 (CCLCAGYFVDATTITECLHTFCKSCIVKYLQTSKYCPMCN) adopts an RING-type zinc-finger fold. A required for repressor activity region spans residues 86-247 (NIKIHETQPL…LSRWFGKPSP (162 aa)). A Glycyl lysine isopeptide (Lys-Gly) (interchain with G-Cter in SUMO2) cross-link involves residue K88. The required for the interaction with the KDM2B-SKP1 heterodimeric complex stretch occupies residues 150-255 (LPFSSFDHSK…SPLLLQYSVK (106 aa)). Positions 167 to 255 (EQLNLCLERL…SPLLLQYSVK (89 aa)) are RING-finger and WD40-associated ubiquitin-like domain (RAWUL); sufficient for interaction with BCOR and BCORL1.

In terms of assembly, interacts with BCORL1, forming heterodimers. The PCGF1-BCORL1 heterodimeric complex interacts with the KDM2B-SKP1 heterodimeric complex to form a homotetrameric polycomb repression complex 1 (PRC1.1). Component of the repressive BCOR complex containing a Polycomb group subcomplex at least composed of RYBP, RING1 and RNF2/RING2. Specifically interacts with BCOR, RING1 and RNF2/RING2. Component of a PRC1-like complex. Interacts with CBX6, CBX7 and CBX8. Interacts with DPPA4, NANOG, POU5F1 and RYBP. In terms of tissue distribution, ubiquitous.

It is found in the nucleus. Component of the Polycomb group (PcG) multiprotein BCOR complex, a complex required to maintain the transcriptionally repressive state of some genes, such as BCL6 and the cyclin-dependent kinase inhibitor, CDKN1A. Transcriptional repressor that may be targeted to the DNA by BCL6; this transcription repressor activity may be related to PKC signaling pathway. Represses CDKN1A expression by binding to its promoter, and this repression is dependent on the retinoic acid response element (RARE element). Promotes cell cycle progression and enhances cell proliferation as well. May have a positive role in tumor cell growth by down-regulating CDKN1A. Component of a Polycomb group (PcG) multiprotein PRC1-like complex, a complex class required to maintain the transcriptionally repressive state of many genes, including Hox genes, throughout development. PcG PRC1 complex acts via chromatin remodeling and modification of histones; it mediates monoubiquitination of histone H2A 'Lys-119', rendering chromatin heritably changed in its expressibility. Within the PRC1-like complex, regulates RNF2 ubiquitin ligase activity. Regulates the expression of DPPA4 and NANOG in the NT2 embryonic carcinoma cells. This chain is Polycomb group RING finger protein 1 (PCGF1), found in Homo sapiens (Human).